Consider the following 1252-residue polypeptide: HEAT repeat-containing protein 6 (1252 aa).

One copy of the HEAT 1 repeat lies at 230–269; that stretch reads PDLLGKSGLLMKLSDVTHSDPEVRRAAVHCMANLCLSVPG. The disordered stretch occupies residues 365 to 417; it reads DGRSPVKPQQPESSAARPSANKKKKYKVKPKKTQQGEKAEEEEPYGEVDAAPG. The segment covering 384–396 has biased composition (basic residues); the sequence is ANKKKKYKVKPKK. A phosphoserine mark is found at serine 471 and serine 474. HEAT repeat units lie at residues 524–562, 586–624, and 630–667; these read ELGS…GSKQ, SSIR…NAPY, and SLLT…THAP. Threonine 689 is modified (phosphothreonine). Phosphoserine is present on serine 714.

In Rattus norvegicus (Rat), this protein is HEAT repeat-containing protein 6 (Heatr6).